The sequence spans 247 residues: Chaperone protein NfaE (247 aa).

Residues 1–29 (MKMRAVAVFTGMLTGVLSVTGLLSAGAYA) form the signal peptide. Residues 106–125 (GQQSSRRRSVSTGGEFPSDR) form a disordered region.

The protein belongs to the periplasmic pilus chaperone family.

The protein localises to the periplasm. Involved in the biogenesis of the NFA-I adhesin. The protein is Chaperone protein NfaE (nfaE) of Escherichia coli.